A 426-amino-acid chain; its full sequence is Isovaleryl-CoA dehydrogenase, mitochondrial (426 aa).

The transit peptide at 1–32 (MATAAWLLGRRVASWRMRPPLQSLAGLITQRT) directs the protein to the mitochondrion. 2 positions are modified to N6-acetyllysine; alternate: Lys-58 and Lys-78. An N6-succinyllysine; alternate mark is found at Lys-58 and Lys-78. FAD-binding positions include 165 to 174 (LAMSEPNAGS) and 198 to 200 (WIT). Position 174 (Ser-174) interacts with substrate. 222–223 (SR) is a binding site for substrate. N6-acetyllysine is present on Lys-241. Substrate-binding positions include Tyr-277 and 284 to 287 (DLER). Glu-286 serves as the catalytic Proton acceptor. Arg-312 serves as a coordination point for FAD. The residue at position 318 (Lys-318) is an N6-succinyllysine. FAD contacts are provided by residues Gln-323 and 380 to 384 (QCLGG). 407-408 (AG) is a substrate binding site. Position 409–411 (409–411 (TSE)) interacts with FAD.

It belongs to the acyl-CoA dehydrogenase family. As to quaternary structure, homotetramer. FAD serves as cofactor.

Its subcellular location is the mitochondrion matrix. It carries out the reaction 3-methylbutanoyl-CoA + oxidized [electron-transfer flavoprotein] + H(+) = 3-methylbut-2-enoyl-CoA + reduced [electron-transfer flavoprotein]. It catalyses the reaction pentanoyl-CoA + oxidized [electron-transfer flavoprotein] + H(+) = (2E)-pentenoyl-CoA + reduced [electron-transfer flavoprotein]. The enzyme catalyses hexanoyl-CoA + oxidized [electron-transfer flavoprotein] + H(+) = (2E)-hexenoyl-CoA + reduced [electron-transfer flavoprotein]. The catalysed reaction is butanoyl-CoA + oxidized [electron-transfer flavoprotein] + H(+) = (2E)-butenoyl-CoA + reduced [electron-transfer flavoprotein]. It participates in amino-acid degradation; L-leucine degradation; (S)-3-hydroxy-3-methylglutaryl-CoA from 3-isovaleryl-CoA: step 1/3. In terms of biological role, catalyzes the conversion of isovaleryl-CoA/3-methylbutanoyl-CoA to 3-methylbut-2-enoyl-CoA as an intermediate step in the leucine (Leu) catabolic pathway. To a lesser extent, is also able to catalyze the oxidation of other saturated short-chain acyl-CoA thioesters as pentanoyl-CoA, hexenoyl-CoA and butenoyl-CoA. In Bos taurus (Bovine), this protein is Isovaleryl-CoA dehydrogenase, mitochondrial (IVD).